The primary structure comprises 152 residues: Transcriptional repressor NrdR (152 aa).

A zinc finger lies at 3 to 34 (CPYCSYNESKVVDSRSTEDSISIRRRRECLEC). The ATP-cone domain maps to 49–139 (ILVIKKNLNR…VYRQFKDINT (91 aa)).

Belongs to the NrdR family. Zn(2+) is required as a cofactor.

In terms of biological role, negatively regulates transcription of bacterial ribonucleotide reductase nrd genes and operons by binding to NrdR-boxes. The sequence is that of Transcriptional repressor NrdR from Clostridium tetani (strain Massachusetts / E88).